The primary structure comprises 560 residues: Embryonal Fyn-associated substrate (560 aa).

Residues 5–68 form the SH3 domain; the sequence is TSAQLARALY…PANRVKLLPA (64 aa). 2 disordered regions span residues 176–219 and 241–372; these read VVPQ…LYAA and ANGE…NEYE. Positions 198–210 are enriched in basic and acidic residues; sequence AELERDPEWEGGR. Tyrosine 253 carries the phosphotyrosine; by SRC modification. Pro residues predominate over residues 259-268; that stretch reads GPEPPSPEPP. 2 consecutive short sequence motifs (SH3-binding) follow at residues 304-310 and 334-340; these read RPLPALP and RPLPPPP. The segment covering 305–315 has biased composition (low complexity); it reads PLPALPVSEAP. The segment covering 351–361 has biased composition (basic and acidic residues); it reads PEGDPECREVA. The interval 437–487 is divergent helix-loop-helix motif; it reads FYAGQCQSHYSALQAAVAALVASTQANQPPCLFVPHGKRVVVAAHRLVFVG.

This sequence belongs to the CAS family. Post-translationally, phosphorylated on multiple tyrosine residues. Phosphorylated on tyrosines by FYN and SRC. Widely expressed. Higher levels found in placenta and embryo. Lower levels found in brain, brainstem, muscle and lung. No expression in liver and intestine.

Docking protein which plays a central coordinating role for tyrosine-kinase-based signaling related to cell adhesion. May serve as an activator of SRC and a downstream effector. Interacts with the SH3 domain of FYN and with CRK, SRC, and YES. This Mus musculus (Mouse) protein is Embryonal Fyn-associated substrate (Efs).